A 129-amino-acid chain; its full sequence is Small ribosomal subunit protein uS11 (129 aa).

The protein belongs to the universal ribosomal protein uS11 family. Part of the 30S ribosomal subunit. Interacts with proteins S7 and S18. Binds to IF-3.

Functionally, located on the platform of the 30S subunit, it bridges several disparate RNA helices of the 16S rRNA. Forms part of the Shine-Dalgarno cleft in the 70S ribosome. This chain is Small ribosomal subunit protein uS11, found in Psychromonas ingrahamii (strain DSM 17664 / CCUG 51855 / 37).